The chain runs to 424 residues: Riboflavin biosynthesis protein RibBA (424 aa).

A DHBP synthase region spans residues 1–206 (MFTCEAGIAS…VDDLITYRYT (206 aa)). D-ribulose 5-phosphate contacts are provided by residues 32-33 (RE), aspartate 37, 145-149 (RPGHT), and glutamate 169. Residue glutamate 33 coordinates Mg(2+). A Mg(2+)-binding site is contributed by histidine 148. Residues 207–424 (YDSLVTKISS…YETVERMSCR (218 aa)) are GTP cyclohydrolase II. 257 to 261 (RVHSE) lines the GTP pocket. Residues cysteine 262, cysteine 273, and cysteine 275 each contribute to the Zn(2+) site. Residues glutamine 278, 301–303 (EGR), and threonine 323 each bind GTP. Residue aspartate 335 is the Proton acceptor; for GTP cyclohydrolase activity of the active site. The Nucleophile; for GTP cyclohydrolase activity role is filled by arginine 337. Residues threonine 358 and lysine 363 each contribute to the GTP site.

The protein in the N-terminal section; belongs to the DHBP synthase family. It in the C-terminal section; belongs to the GTP cyclohydrolase II family. Mg(2+) is required as a cofactor. Requires Mn(2+) as cofactor. The cofactor is Zn(2+).

The enzyme catalyses D-ribulose 5-phosphate = (2S)-2-hydroxy-3-oxobutyl phosphate + formate + H(+). It catalyses the reaction GTP + 4 H2O = 2,5-diamino-6-hydroxy-4-(5-phosphoribosylamino)-pyrimidine + formate + 2 phosphate + 3 H(+). The protein operates within cofactor biosynthesis; riboflavin biosynthesis; 2-hydroxy-3-oxobutyl phosphate from D-ribulose 5-phosphate: step 1/1. It participates in cofactor biosynthesis; riboflavin biosynthesis; 5-amino-6-(D-ribitylamino)uracil from GTP: step 1/4. Its function is as follows. Catalyzes the conversion of D-ribulose 5-phosphate to formate and 3,4-dihydroxy-2-butanone 4-phosphate. Functionally, catalyzes the conversion of GTP to 2,5-diamino-6-ribosylamino-4(3H)-pyrimidinone 5'-phosphate (DARP), formate and pyrophosphate. This chain is Riboflavin biosynthesis protein RibBA, found in Chlamydia trachomatis serovar D (strain ATCC VR-885 / DSM 19411 / UW-3/Cx).